Consider the following 718-residue polypeptide: Protein spire homolog 2 (718 aa).

Disordered stretches follow at residues 1–22 (MARA…ARPE) and 143–166 (DSSC…EGGP). The span at 10–21 (AAPERAGGAARP) shows a compositional bias: low complexity. One can recognise a KIND domain in the interval 26-207 (LSLEEVLKVY…RALFVETLEL (182 aa)). 3 consecutive WH2 domains span residues 251 to 265 (QLMR…LKKV), 281 to 299 (PFEM…LRKV), and 345 to 362 (LHEK…LRPV). Ser374 carries the post-translational modification Phosphoserine. The interval 397–434 (TDTGSGSQRPRPRVLLKAPTLAEMEEMNTSEEEESPCG) is disordered. A compositionally biased stretch (acidic residues) spans 419–432 (EMEEMNTSEEEESP). Phosphoserine occurs at positions 443, 445, and 479. Residues 456–518 (MASGLQSAAQ…SSLSSVDGPE (63 aa)) form a disordered region. Positions 496-513 (SGQSQPLPSSALPSSLSS) are enriched in low complexity. The interval 538-558 (LALTVEEVVDVRRVLVKAEME) is spir-box.

The protein belongs to the spire family. As to expression, detected in oocytes.

The protein resides in the cytoplasm. Its subcellular location is the cytoskeleton. It is found in the cytosol. It localises to the cell membrane. The protein localises to the cytoplasmic vesicle membrane. Functionally, acts as an actin nucleation factor, remains associated with the slow-growing pointed end of the new filament. Involved in intracellular vesicle transport along actin fibers, providing a novel link between actin cytoskeleton dynamics and intracellular transport. Required for asymmetric spindle positioning and asymmetric cell division during oocyte meiosis. Required for normal formation of the cleavage furrow and for polar body extrusion during female germ cell meiosis. Also acts in the nucleus: together with SPIRE1 and SPIRE2, promotes assembly of nuclear actin filaments in response to DNA damage in order to facilitate movement of chromatin and repair factors after DNA damage. This is Protein spire homolog 2 (Spire2) from Mus musculus (Mouse).